Consider the following 85-residue polypeptide: MAHKKAGGSSRNGRDSNSKRLGVKRFGGELIPAGSIIIRQRGTRVHPGENVGMGKDHTLFAKVDGRVNFTVKGLPQRKTVSIIPA.

The tract at residues 1–24 (MAHKKAGGSSRNGRDSNSKRLGVK) is disordered.

It belongs to the bacterial ribosomal protein bL27 family.

In Nitrosospira multiformis (strain ATCC 25196 / NCIMB 11849 / C 71), this protein is Large ribosomal subunit protein bL27.